Reading from the N-terminus, the 485-residue chain is Glutamate--tRNA ligase (485 aa).

The 'HIGH' region motif lies at 11 to 21 (PSPTGHLHIGN). The short motif at 252-256 (KLSKR) is the 'KMSKS' region element. An ATP-binding site is contributed by Lys-255.

This sequence belongs to the class-I aminoacyl-tRNA synthetase family. Glutamate--tRNA ligase type 1 subfamily. In terms of assembly, monomer.

Its subcellular location is the cytoplasm. It carries out the reaction tRNA(Glu) + L-glutamate + ATP = L-glutamyl-tRNA(Glu) + AMP + diphosphate. Its function is as follows. Catalyzes the attachment of glutamate to tRNA(Glu) in a two-step reaction: glutamate is first activated by ATP to form Glu-AMP and then transferred to the acceptor end of tRNA(Glu). The sequence is that of Glutamate--tRNA ligase from Bacillus cytotoxicus (strain DSM 22905 / CIP 110041 / 391-98 / NVH 391-98).